The chain runs to 295 residues: MELLSALSLGELALSFSRVPLFPVFDLSYFIVSILYLKYEPGAVELSRRHPVASWLCAMLHCFGSYILADLLLGEPLIDYFSNNSSILLASAVWYLIFFCPLDLFYKCVCFLPVKLIFVAMKEVVRVRKIAVGIHHAHHHYHHGWFIMIATGWVKGSGVALLSNVEQLLRGVWKPETNEILHMSFPTKASLYGAILFTLQQTRWLPVSKASLIFIFTMFMVSCKVFLTATHSHSSPFDVLEAYVCPVLFGTGSGGDHPQDNHGAWPGGPPSGALATKSKEELSEGSRKKKTKKAD.

Topologically, residues 1-18 are lumenal; that stretch reads MELLSALSLGELALSFSR. The chain crosses the membrane as a helical span at residues 19–39; that stretch reads VPLFPVFDLSYFIVSILYLKY. Residues 40–51 are Cytoplasmic-facing; the sequence is EPGAVELSRRHP. Residues 52 to 72 form a helical membrane-spanning segment; it reads VASWLCAMLHCFGSYILADLL. Topologically, residues 73–85 are lumenal; the sequence is LGEPLIDYFSNNS. Residue G74 participates in Ca(2+) binding. Residues 86-106 form a helical membrane-spanning segment; that stretch reads SILLASAVWYLIFFCPLDLFY. Topologically, residues 107–144 are cytoplasmic; that stretch reads KCVCFLPVKLIFVAMKEVVRVRKIAVGIHHAHHHYHHG. 2 residues coordinate a 1,2-diacyl-sn-glycero-3-phospho-(1D-myo-inositol-4,5-bisphosphate): K122 and R126. The helical transmembrane segment at 145-165 threads the bilayer; that stretch reads WFIMIATGWVKGSGVALLSNV. Topologically, residues 166–178 are lumenal; the sequence is EQLLRGVWKPETN. Residues 179–199 form a helical membrane-spanning segment; sequence EILHMSFPTKASLYGAILFTL. Over 200-209 the chain is Cytoplasmic; that stretch reads QQTRWLPVSK. Residues 210 to 230 form a helical membrane-spanning segment; that stretch reads ASLIFIFTMFMVSCKVFLTAT. Residues 231-234 lie on the Lumenal side of the membrane; the sequence is HSHS. The chain crosses the membrane as a helical span at residues 235 to 255; that stretch reads SPFDVLEAYVCPVLFGTGSGG. Topologically, residues 256-295 are cytoplasmic; that stretch reads DHPQDNHGAWPGGPPSGALATKSKEELSEGSRKKKTKKAD. Residues 256–295 form a disordered region; it reads DHPQDNHGAWPGGPPSGALATKSKEELSEGSRKKKTKKAD. Residues 277–286 show a composition bias toward basic and acidic residues; that stretch reads KSKEELSEGS.

Belongs to the TMEM38 family. Homotrimer; conformation seems to be controled by binding to diacylglycerol (DAG).

It localises to the sarcoplasmic reticulum membrane. Its subcellular location is the nucleus membrane. The enzyme catalyses K(+)(in) = K(+)(out). With respect to regulation, channel activity is activated by a change of voltage within the sarcoplasmic reticulum lumen and blocked by luminal high Ca(2+) levels. Its function is as follows. Intracellular monovalent cation channel required for maintenance of rapid intracellular calcium release. Acts as a potassium counter-ion channel that functions in synchronization with calcium release from intracellular stores. Opened by a change of voltage within the sarcoplasmic reticulum lumen. The sequence is that of Trimeric intracellular cation channel type A from Oryctolagus cuniculus (Rabbit).